Consider the following 136-residue polypeptide: SPbeta prophage-derived uncharacterized protein YonI (136 aa).

The polypeptide is SPbeta prophage-derived uncharacterized protein YonI (yonI) (Bacillus subtilis (strain 168)).